A 342-amino-acid chain; its full sequence is Foldase protein PrsA (342 aa).

The N-terminal stretch at 1-22 (MVSVKKIVASALVGVLMFSAVG) is a signal peptide. A lipid anchor (N-palmitoyl cysteine) is attached at cysteine 23. Cysteine 23 is lipidated: S-diacylglycerol cysteine. Residues 189 to 284 (DSGVLTKHLL…FGYHIIQAGA (96 aa)) form the PpiC domain.

The protein belongs to the PrsA family.

The protein localises to the cell membrane. It carries out the reaction [protein]-peptidylproline (omega=180) = [protein]-peptidylproline (omega=0). Its function is as follows. Plays a major role in protein secretion by helping the post-translocational extracellular folding of several secreted proteins. The sequence is that of Foldase protein PrsA from Clostridium perfringens (strain ATCC 13124 / DSM 756 / JCM 1290 / NCIMB 6125 / NCTC 8237 / Type A).